The chain runs to 298 residues: Probable endonuclease 4 (298 aa).

Positions 69, 111, 146, 180, 183, 215, 228, 230, and 260 each coordinate Zn(2+).

It belongs to the AP endonuclease 2 family. Zn(2+) serves as cofactor.

The catalysed reaction is Endonucleolytic cleavage to 5'-phosphooligonucleotide end-products.. Functionally, endonuclease IV plays a role in DNA repair. It cleaves phosphodiester bonds at apurinic or apyrimidinic (AP) sites, generating a 3'-hydroxyl group and a 5'-terminal sugar phosphate. This chain is Probable endonuclease 4, found in Bacillus cereus (strain AH820).